The following is a 68-amino-acid chain: DNA gyrase inhibitor YacG (68 aa).

Zn(2+) is bound by residues C12, C15, C30, and C34. The segment at 48-68 (KLKTQDAPTSGKGQHSDDYED) is disordered.

Belongs to the DNA gyrase inhibitor YacG family. As to quaternary structure, interacts with GyrB. Requires Zn(2+) as cofactor.

Functionally, inhibits all the catalytic activities of DNA gyrase by preventing its interaction with DNA. Acts by binding directly to the C-terminal domain of GyrB, which probably disrupts DNA binding by the gyrase. The polypeptide is DNA gyrase inhibitor YacG (Acinetobacter baylyi (strain ATCC 33305 / BD413 / ADP1)).